Consider the following 719-residue polypeptide: Ribosomal RNA large subunit methyltransferase K/L (719 aa).

The THUMP domain maps to 43-154 (IGYKACLWSR…KGKANITLDL (112 aa)).

Belongs to the methyltransferase superfamily. RlmKL family.

Its subcellular location is the cytoplasm. It catalyses the reaction guanosine(2445) in 23S rRNA + S-adenosyl-L-methionine = N(2)-methylguanosine(2445) in 23S rRNA + S-adenosyl-L-homocysteine + H(+). It carries out the reaction guanosine(2069) in 23S rRNA + S-adenosyl-L-methionine = N(2)-methylguanosine(2069) in 23S rRNA + S-adenosyl-L-homocysteine + H(+). In terms of biological role, specifically methylates the guanine in position 2445 (m2G2445) and the guanine in position 2069 (m7G2069) of 23S rRNA. In Aeromonas salmonicida (strain A449), this protein is Ribosomal RNA large subunit methyltransferase K/L.